Here is a 757-residue protein sequence, read N- to C-terminus: Endonuclease MutS2 (757 aa).

321-328 (GPNMGGKT) is an ATP binding site. In terms of domain architecture, Smr spans 681–756 (IDIRGMTVEE…GTGVTVVEVK (76 aa)).

The protein belongs to the DNA mismatch repair MutS family. MutS2 subfamily. As to quaternary structure, homodimer. Binds to stalled ribosomes, contacting rRNA. Interacts with MutL.

Its activity is regulated as follows. Nuclease activity is stimulated by interaction with MutL and inhibited in the presence of non-hydrolytic ATP (ADPnP). ATPase activity is stimulated by DNA. Functionally, endonuclease that is involved in the suppression of homologous recombination and thus may have a key role in the control of bacterial genetic diversity. Has ATPase activity. Binds to DNA. In terms of biological role, acts as a ribosome collision sensor, splitting the ribosome into its 2 subunits. Detects stalled/collided 70S ribosomes which it binds and splits by an ATP-hydrolysis driven conformational change. Acts upstream of the ribosome quality control system (RQC), a ribosome-associated complex that mediates the extraction of incompletely synthesized nascent chains from stalled ribosomes and their subsequent degradation. Probably generates substrates for RQC. The protein is Endonuclease MutS2 of Thermotoga maritima (strain ATCC 43589 / DSM 3109 / JCM 10099 / NBRC 100826 / MSB8).